Consider the following 892-residue polypeptide: Alanine--tRNA ligase (892 aa).

Residues H596, H600, C700, and H704 each contribute to the Zn(2+) site.

Belongs to the class-II aminoacyl-tRNA synthetase family. Zn(2+) serves as cofactor.

It is found in the cytoplasm. It catalyses the reaction tRNA(Ala) + L-alanine + ATP = L-alanyl-tRNA(Ala) + AMP + diphosphate. Catalyzes the attachment of alanine to tRNA(Ala) in a two-step reaction: alanine is first activated by ATP to form Ala-AMP and then transferred to the acceptor end of tRNA(Ala). Also edits incorrectly charged Ser-tRNA(Ala) and Gly-tRNA(Ala) via its editing domain. This chain is Alanine--tRNA ligase, found in Methanococcus maripaludis (strain C7 / ATCC BAA-1331).